We begin with the raw amino-acid sequence, 426 residues long: MGEIQAIRGTKDILPAEVGYWQWLEETASRILGTALYQEIRTPIFEQTQLFERGIGEATDVVGKEMYTFLDRRQRSLTLRPEGTAGVVRAYIEHKLQAAGGVQRLWYKGPMFRYERPQAGRQRQFHQIGVELLGSDDPRADVEVITLASEILKAVGLENLKLDINSLGNAQDRQNYRQALLDYLTPYKADLDADSQQRLEKNPLRILDSKDEKTKIICENVPSILEHLGSDSQKHFERVQSLLTDLGVIYNLNPCLVRGLDYYTHTAFEIQSDDLGAQATVCGGGRYDGLIAQLGGLDTPAVGWAIGLERLIILLQQKQSLSFLVPDFYLVSKGEKAEARSVVLAQQLRGLGFSVELDLSGSAFGKQFKRADRAKAVGCIILGDAEAENGTVQLKWMATQEQISLTQADLLTQAGELKAQISRHKS.

This sequence belongs to the class-II aminoacyl-tRNA synthetase family. In terms of assembly, homodimer.

It is found in the cytoplasm. The enzyme catalyses tRNA(His) + L-histidine + ATP = L-histidyl-tRNA(His) + AMP + diphosphate + H(+). This Microcystis aeruginosa (strain NIES-843 / IAM M-2473) protein is Histidine--tRNA ligase.